A 390-amino-acid chain; its full sequence is Na(+)/H(+) antiporter NhaA 1 (390 aa).

The next 11 membrane-spanning stretches (helical) occupy residues 14–34 (SGILIILAMILALILANNGVL), 59–79 (TILWVNDGLMAIFFFFIGLEL), 94–114 (VALPSIAGIGGVIVPAVIFYV), 125–145 (GWAIPTVSDTAFALAVLFLLG), 154–174 (LFLLSLAIIDDVAAIIIIAIF), 179–199 (LSIISLFISFCAIVILTILNY), 205–225 (IYIYLLCGIVLWVSVLMSGIH), 260–280 (PIVAFLILPIFAFSNAGVVFS), 295–315 (IIFGLFIGKQIGVFSFAFLAI), 328–348 (WLHLYGLSILTGVGMSMSLFI), and 362–382 (ANKIAILLASTMCAVTGYFVL).

Belongs to the NhaA Na(+)/H(+) (TC 2.A.33) antiporter family.

It is found in the cell inner membrane. It carries out the reaction Na(+)(in) + 2 H(+)(out) = Na(+)(out) + 2 H(+)(in). Na(+)/H(+) antiporter that extrudes sodium in exchange for external protons. The chain is Na(+)/H(+) antiporter NhaA 1 from Campylobacter fetus subsp. fetus (strain 82-40).